Here is an 812-residue protein sequence, read N- to C-terminus: ATP-dependent RNA helicase dbp4 (812 aa).

The disordered stretch occupies residues 1–28 (MAPSNGHRNGKHAKSSNKSGNLKRKRVQ). A compositionally biased stretch (basic residues) spans 8–26 (RNGKHAKSSNKSGNLKRKR). Positions 48–76 (ESFSDLPISEPTLSGLTSSHFKTLTDIQS) match the Q motif motif. The region spanning 79–253 (ISHALKGRDV…RLSLQDPEYV (175 aa)) is the Helicase ATP-binding domain. Residue 92–99 (AKTGSGKT) coordinates ATP. Positions 201–204 (DEAD) match the DEAD box motif. The region spanning 279 to 438 (KLDTLWSFIR…SIKNQLQNMC (160 aa)) is the Helicase C-terminal domain. 3 disordered regions span residues 503–538 (NASR…TKYD), 560–626 (DGTI…ISDK), and 687–797 (ARFL…EKQI). Composition is skewed to basic and acidic residues over residues 521-538 (EGGK…TKYD), 579-596 (LSVK…HAED), 610-626 (EDHT…ISDK), and 687-709 (ARFL…EIAK). The segment covering 710 to 719 (QKRREKKEKR) has biased composition (basic residues). Basic and acidic residues-rich tracts occupy residues 720-736 (KARE…EERV) and 763-794 (EAPR…DAGE).

This sequence belongs to the DEAD box helicase family. DDX10/DBP4 subfamily. Interacts with the U3 and U14 snoRNAs. Associates with pre-ribosomal complexes.

Its subcellular location is the nucleus. It is found in the nucleolus. It carries out the reaction ATP + H2O = ADP + phosphate + H(+). Functionally, ATP-dependent RNA helicase required for ribosome biogenesis. Involved in the release of U14 snoRNA in pre-ribosomal complexes. Required for pre-rRNA cleavage at site A2. The chain is ATP-dependent RNA helicase dbp4 (dbp4) from Emericella nidulans (strain FGSC A4 / ATCC 38163 / CBS 112.46 / NRRL 194 / M139) (Aspergillus nidulans).